The sequence spans 385 residues: MYVRHLGLRDFRSWACVDLELHPGRTVFVGPNGYGKTNLIEALWYSTTLGSHRVSADLPLIRVGTDRAVISTIVVNDGRECAVDLEIATGRVNKARLNRSSVRSTRDVVGVLRAVLFAPEDLGLVRGDPADRRRYLDDLAIVRRPAIAAVRAEYERVVRQRTALLKSVPGARYRGDRGVFDTLEVWDSRLAEHGAELVAARIDLVNQLAPEVKKAYQLLAPESRSASIGYRASMDVTGPSEQSDTDRQLLAARLLAALAARRDAELERGVCLVGPHRDDLILRLGDQPAKGFASHGEAWSLAVALRLAAYQLLRVDGGEPVLLLDDVFAELDVMRRRALATAAESAEQVLVTAAVLEDIPAGWDARRVHIDVRADDTGSMSVVLP.

Gly30–Thr37 lines the ATP pocket.

The protein belongs to the RecF family.

The protein localises to the cytoplasm. Functionally, the RecF protein is involved in DNA metabolism; it is required for DNA replication and normal SOS inducibility. RecF binds preferentially to single-stranded, linear DNA. It also seems to bind ATP. The protein is DNA replication and repair protein RecF of Mycobacterium bovis (strain ATCC BAA-935 / AF2122/97).